Reading from the N-terminus, the 477-residue chain is Glycogen synthase (477 aa).

K15 is an ADP-alpha-D-glucose binding site.

Belongs to the glycosyltransferase 1 family. Bacterial/plant glycogen synthase subfamily.

It catalyses the reaction [(1-&gt;4)-alpha-D-glucosyl](n) + ADP-alpha-D-glucose = [(1-&gt;4)-alpha-D-glucosyl](n+1) + ADP + H(+). It functions in the pathway glycan biosynthesis; glycogen biosynthesis. Functionally, synthesizes alpha-1,4-glucan chains using ADP-glucose. The sequence is that of Glycogen synthase from Shigella boydii serotype 4 (strain Sb227).